Consider the following 493-residue polypeptide: ATP synthase subunit beta, chloroplastic (493 aa).

ATP is bound at residue 170 to 177 (GGAGVGKT).

The protein belongs to the ATPase alpha/beta chains family. As to quaternary structure, F-type ATPases have 2 components, CF(1) - the catalytic core - and CF(0) - the membrane proton channel. CF(1) has five subunits: alpha(3), beta(3), gamma(1), delta(1), epsilon(1). CF(0) has four main subunits: a(1), b(1), b'(1) and c(9-12).

The protein localises to the plastid. It localises to the chloroplast thylakoid membrane. It catalyses the reaction ATP + H2O + 4 H(+)(in) = ADP + phosphate + 5 H(+)(out). Functionally, produces ATP from ADP in the presence of a proton gradient across the membrane. The catalytic sites are hosted primarily by the beta subunits. This is ATP synthase subunit beta, chloroplastic from Staurastrum punctulatum (Green alga).